The chain runs to 418 residues: MHPRRPEGFDGLGYRGGVRDDPAFGGPFHARSFGSGTELGHWVTTPPDIPGSRNLHWGEKSPSYGVPSAPPTLEGSAEEPFPGGGEGPRPGPSSEQLNRFAGFGIGLASLFTENVLAHPCIVLRRQCQVNYHARHYHLTPFSIINIMYSFNKTQGPRALWKGMGSTFIVQGVTLGAEGIISEFTPLPREVSHKLNPKQIGEHLLLKCLTYMVAMPFYSASLIETVQSEIIRDNTGILECVKEGIGRVIGLGVPHSKRLLPLFSLIFPTVLHGVLHYIISSIIQKIVLLILKRKTYNSHLAESTSPMQNMLDAYFPELIANFAASLCSDVILYPLETVLHRLHIQGTRTIIDNTDLGYEVLPINTQYEGMRDCINTIKQEEGVFGFYKGFGAVIIQYTLHATILQITKMIYSTLLQNSI.

Phosphoserine is present on residues Ser32 and Ser35. At Thr45 the chain carries Phosphothreonine. The interval 46 to 96 (PPDIPGSRNLHWGEKSPSYGVPSAPPTLEGSAEEPFPGGGEGPRPGPSSEQ) is disordered. The stretch at 96 to 187 (QLNRFAGFGI…GIISEFTPLP (92 aa)) is one Solcar 1 repeat. The next 6 membrane-spanning stretches (helical) occupy residues 103–123 (FGIGLASLFTENVLAHPCIVL), 167–187 (FIVQGVTLGAEGIISEFTPLP), 202–222 (HLLLKCLTYMVAMPFYSASLI), 258–278 (LLPLFSLIFPTVLHGVLHYII), 314–334 (FPELIANFAASLCSDVILYPL), and 382–402 (VFGFYKGFGAVIIQYTLHATI). A Solcar 2 repeat occupies 311–413 (DAYFPELIAN…QITKMIYSTL (103 aa)).

Belongs to the mitochondrial carrier (TC 2.A.29) family. Associates with the mitochondrial contact site and cristae organizing system (MICOS) complex. May associate with the endoplasmic reticulum membrane protein complex (EMC).

The protein localises to the mitochondrion outer membrane. Its function is as follows. Transmembrane protein of the mitochondrial outer membrane that controls mitochondrial organization. May regulate the assembly of the MICOS (mitochondrial contact site and cristae organizing system) complex which is essential to the biogenesis and dynamics of mitochondrial cristae, the inwards folds of the inner mitochondrial membrane. Through its interaction with the EMC (endoplasmic reticulum membrane protein complex), could regulate mitochondrial lipid homeostasis and thereby mitochondrial fission. The polypeptide is Mitochondrial outer membrane protein SLC25A46 (Mus musculus (Mouse)).